Consider the following 594-residue polypeptide: Metastasis-associated protein MTA3 (594 aa).

A BAH domain is found at 1–147 (MAANMYRVGD…PSLKTLLADK (147 aa)). The region spanning 148–259 (GEIRVGPRYQ…SAISVLVPLG (112 aa)) is the ELM2 domain. An SANT domain is found at 266–318 (DEMEEWSASEASLFEEALEKYGKDFNDIRQDFLPWKSLTSIIEYYYMWKTTDR). Residues 379-406 (CESCYATQSHQWYSWGPPNMQCRLCAIC) form a GATA-type; atypical zinc finger. Phosphoserine occurs at positions 428 and 430. Phosphothreonine is present on Thr-455. Residue Ser-519 is modified to Phosphoserine.

Belongs to the metastasis-associated protein family. As to quaternary structure, component of the nucleosome remodeling and deacetylase (NuRD) repressor complex, composed of core proteins MTA1, MTA2, MTA3, RBBP4, RBBP7, HDAC1, HDAC2, MBD2, MBD3, and peripherally associated proteins CDK2AP1, CDK2AP2, GATAD2A, GATAD2B, CHD3, CHD4 and CHD5. The exact stoichiometry of the NuRD complex is unknown, and some subunits such as MBD2 and MBD3, GATAD2A and GATAD2B, and CHD3, CHD4 and CHD5 define mutually exclusive NuRD complexes. Interacts with BCL6. Interacts with NACC2. Interacts with PWWP2B. Expressed in germinal centers of lymphoid tissues. No expression in nonepithelial cells.

Its subcellular location is the nucleus. The protein localises to the cytoplasm. Functionally, acts as a component of the histone deacetylase NuRD complex which participates in the remodeling of chromatin. Plays a role in maintenance of the normal epithelial architecture through the repression of SNAI1 transcription in a histone deacetylase-dependent manner, and thus the regulation of E-cadherin levels. Contributes to transcriptional repression by BCL6. In Homo sapiens (Human), this protein is Metastasis-associated protein MTA3 (MTA3).